The sequence spans 355 residues: Heat-inducible transcription repressor HrcA (355 aa).

Belongs to the HrcA family.

In terms of biological role, negative regulator of class I heat shock genes (grpE-dnaK-dnaJ and groELS operons). Prevents heat-shock induction of these operons. The polypeptide is Heat-inducible transcription repressor HrcA (Prosthecochloris aestuarii (strain DSM 271 / SK 413)).